Here is a 476-residue protein sequence, read N- to C-terminus: MEPLAILVLLCFPICSAYPLHGAVRQDHSTMDLAQQYLEKYYNFRKNEKQFFKRKDSSPVVKKIEEMQKFLGLEMTGKLDSNTVEMMHKPRCGVPDVGGFSTFPGSPKWRKNHISYRIVNYTLDLPRESVDSAIERALKVWEEVTPLTFSRISEGEADIMISFAVGEHGDFYPFDGVGQSLAHAYPPGPGFYGDAHFDDDEKWSLGPSGTNLFLVAAHELGHSLGLFHSNNKESLMYPVYRFSTSQANIRLSQDDIEGIQSLYGARPSSDATVVPVPSVSPKPETPVKCDPALSFDAVTMLRGEFLFFKDRHFWRRTQWNPEPEFHLISAFWPSLPSGLDAAYEANNKDRVLIFKGSQFWAVRGNEVQAGYPKRIHTLGFPPTVKKIDAAVFEKEKKKTYFFVGDKYWRFDETRQLMDKGFPRLITDDFPGIEPQVDAVLHAFGFFYFFCGSSQFEFDPNARTVTHTLKSNSWLLC.

A signal peptide spans 1–17 (MEPLAILVLLCFPICSA). Residues 18–99 (YPLHGAVRQD…PRCGVPDVGG (82 aa)) constitute a propeptide, activation peptide. Positions 90-97 (PRCGVPDV) match the Cysteine switch motif. 6 residues coordinate Zn(2+): Cys92, His168, Asp170, His183, His196, and His218. The active site involves Glu219. Residues His222 and His228 each contribute to the Zn(2+) site. Hemopexin repeat units follow at residues 286-335 (PVKC…WPSL), 336-382 (PSGL…GFPP), 384-432 (VKKI…FPGI), and 433-476 (EPQV…WLLC). Residues Cys289 and Cys476 are joined by a disulfide bond.

Belongs to the peptidase M10A family. It depends on Zn(2+) as a cofactor. The cofactor is Ca(2+).

It localises to the secreted. It is found in the extracellular space. The protein localises to the extracellular matrix. It carries out the reaction Similar to stromelysin 1, but action on collagen types III, IV and V is weak.. Functionally, can degrade fibronectin, gelatins of type I, III, IV, and V; weakly collagens III, IV, and V. Activates procollagenase. This Rattus norvegicus (Rat) protein is Stromelysin-2 (Mmp10).